The sequence spans 79 residues: Tau-theraphotoxin-Hs1a (79 aa).

6 disulfide bridges follow: Cys-2-Cys-16, Cys-9-Cys-23, Cys-15-Cys-31, Cys-44-Cys-58, Cys-51-Cys-63, and Cys-57-Cys-71. 2 Domain repeats span residues 2–31 and 42–71; these read CAKEGEVCSWGKKCCDLDNFYCPMEFIPHC and TNCAKEGEVCGWGSKCCHGLDCPLAFIPYC. The segment at 2–71 is 2 X approximate repeats with cysteine pattern C-C-CC-C-C; it reads CAKEGEVCSW…DCPLAFIPYC (70 aa).

The protein belongs to the neurotoxin 23 family. Double-knot toxin subfamily. As to quaternary structure, interacts with TRPV1 (2 toxins (4 moieties) bind 1 channel (homotetramer)). In terms of tissue distribution, expressed by the venom gland.

Its subcellular location is the secreted. Functionally, selectively activates the heat-activated TRPV1 channel. It binds to TRPV1 in an open state-dependent manner, trapping it there to produce irreversible currents. It binds to the outer edge of the external pore of TRPV1 in a counterclockwise configuration, using a limited protein-protein interface and inserting hydrophobic residues into the bilayer. It also partitions naturally into membranes, with the two lobes exhibiting opposing energetics for membrane partitioning (K1) and channel activation (K2). In addition, the toxin disrupts a cluster of hydrophobic residues behind the selectivity filter that are critical for channel activation. This Cyriopagopus schmidti (Chinese bird spider) protein is Tau-theraphotoxin-Hs1a.